Here is a 486-residue protein sequence, read N- to C-terminus: MPQLRDSGTRSLHATEPVPSAEMDGFCRIFGVETEYGVAVTGAERPVDAGQVAMTMFQPIVSRSRSTNTYLANGSRLYLDVGSHPEYATAEARDPREALAQDLAGEHVMRNLALKAQRKLRESYGAHATIHVFKNNVDSAGHAFGCHENYLVRRFVPLETIEHQLLPFLITRQLYTGAGRMTPDGFQITQRADFLDEAVSSATTRSRPMVNTRDEPHADPDSFRRLHVIIGDSNRSQWSTWMKLAVTHLVLCAIEDAFRHGVPSGFEQYAFADPAAANRTVSRFLDNPRAELTLESGESVSALGLQRRYYAAVKAFIETHGDALAGSLPATTIDTIMGEWSRVLDALERGAYDALADRVDWAAKKCLFDALKRRRPDVTFAQMEQLELDYHDIANGRLYGSLVARNQMRELLTGDNVEYAVHNPPTDTRAALRGRFVDAALNVGAQFSADWTHLTLTAPERREAILLDPFEAEPTLGFEQLMEALN.

Glu33 contributes to the Mg(2+) binding site. Residue Arg76 coordinates ATP. A Mg(2+)-binding site is contributed by Tyr78. Asp80 functions as the Proton acceptor in the catalytic mechanism. Residue Glu86 participates in Mg(2+) binding. Thr89 and Trp451 together coordinate ATP.

Belongs to the Pup ligase/Pup deamidase family. Pup-conjugating enzyme subfamily.

It carries out the reaction ATP + [prokaryotic ubiquitin-like protein]-L-glutamate + [protein]-L-lysine = ADP + phosphate + N(6)-([prokaryotic ubiquitin-like protein]-gamma-L-glutamyl)-[protein]-L-lysine.. It participates in protein degradation; proteasomal Pup-dependent pathway. Its pathway is protein modification; protein pupylation. Catalyzes the covalent attachment of the prokaryotic ubiquitin-like protein modifier Pup to the proteasomal substrate proteins, thereby targeting them for proteasomal degradation. This tagging system is termed pupylation. The ligation reaction involves the side-chain carboxylate of the C-terminal glutamate of Pup and the side-chain amino group of a substrate lysine. The chain is Pup--protein ligase from Bifidobacterium longum (strain NCC 2705).